Reading from the N-terminus, the 385-residue chain is Carbamoyl phosphate synthase small chain (385 aa).

The CPSase stretch occupies residues 1–185 (MSEPAILVLA…LGKGFIEQTQ (185 aa)). S47, G237, and G239 together coordinate L-glutamine. The 188-residue stretch at 189–376 (NVVAYDFGVK…INEMRKANLS (188 aa)) folds into the Glutamine amidotransferase type-1 domain. Residue C265 is the Nucleophile of the active site. L-glutamine contacts are provided by L266, Q269, N307, G309, and F310. Residues H349 and E351 contribute to the active site.

It belongs to the CarA family. In terms of assembly, composed of two chains; the small (or glutamine) chain promotes the hydrolysis of glutamine to ammonia, which is used by the large (or ammonia) chain to synthesize carbamoyl phosphate. Tetramer of heterodimers (alpha,beta)4.

The catalysed reaction is hydrogencarbonate + L-glutamine + 2 ATP + H2O = carbamoyl phosphate + L-glutamate + 2 ADP + phosphate + 2 H(+). The enzyme catalyses L-glutamine + H2O = L-glutamate + NH4(+). Its pathway is amino-acid biosynthesis; L-arginine biosynthesis; carbamoyl phosphate from bicarbonate: step 1/1. It participates in pyrimidine metabolism; UMP biosynthesis via de novo pathway; (S)-dihydroorotate from bicarbonate: step 1/3. Functionally, small subunit of the glutamine-dependent carbamoyl phosphate synthetase (CPSase). CPSase catalyzes the formation of carbamoyl phosphate from the ammonia moiety of glutamine, carbonate, and phosphate donated by ATP, constituting the first step of 2 biosynthetic pathways, one leading to arginine and/or urea and the other to pyrimidine nucleotides. The small subunit (glutamine amidotransferase) binds and cleaves glutamine to supply the large subunit with the substrate ammonia. In Pasteurella multocida (strain Pm70), this protein is Carbamoyl phosphate synthase small chain.